Reading from the N-terminus, the 349-residue chain is Acyl-CoA Delta(11) desaturase (349 aa).

A run of 2 helical transmembrane segments spans residues 41–61 (FLTFSYAHLAALYGLYLCFTS) and 66–86 (TLLFSFVLFHMSNIGITAGAH). The short motif at 86–91 (HRLWTH) is the Histidine box-1 element. A Histidine box-2 motif is present at residues 123–127 (HRLHH). A helical membrane pass occupies residues 184 to 204 (AVPLIGTVCFALPTLIPVYCW). Residues 263–267 (HNYHH) carry the Histidine box-3 motif. Residues 282 to 302 (FLNLTTLFIDFCAWFGWAYDL) form a helical membrane-spanning segment.

This sequence belongs to the fatty acid desaturase type 1 family. Requires Fe cation as cofactor. As to expression, adult female pheromone gland. Increases by two or three orders of magnitude during the first 2 days after adult eclosion.

Its subcellular location is the endoplasmic reticulum membrane. It catalyses the reaction an 11,12-saturated fatty acyl-CoA + 2 Fe(II)-[cytochrome b5] + O2 + 2 H(+) = an (11Z)-Delta(11)-fatty acyl-CoA + 2 Fe(III)-[cytochrome b5] + 2 H2O. In terms of biological role, catalyzes the formation of Delta(11) fatty acyl precursors in the pheromone gland. This chain is Acyl-CoA Delta(11) desaturase (D11DS), found in Trichoplusia ni (Cabbage looper).